The chain runs to 98 residues: uncharacterized protein (98 aa).

This is an uncharacterized protein from Dictyostelium discoideum (Social amoeba).